The sequence spans 489 residues: Heme-based aerotactic transducer HemAT (489 aa).

Residues 218-454 (PLSSLEATSQ…EVAEMVDDVD (237 aa)) enclose the Methyl-accepting transducer domain.

It belongs to the methyl-accepting chemotaxis (MCP) protein family. In terms of assembly, homotetramer.

Heme-containing signal transducer responsible for aerotaxis, the migratory response toward or away from oxygen. This is Heme-based aerotactic transducer HemAT (hemAT) from Halobacterium salinarum (strain ATCC 700922 / JCM 11081 / NRC-1) (Halobacterium halobium).